The primary structure comprises 493 residues: Ketol-acid reductoisomerase (NADP(+)) (493 aa).

Positions 17–208 (LSQCRFMDRS…GGDRAGVLHS (192 aa)) constitute a KARI N-terminal Rossmann domain. NADP(+) is bound by residues 45-48 (CGAQ), arginine 68, arginine 76, serine 78, and 108-110 (DKQ). Residue histidine 132 is part of the active site. Glycine 158 serves as a coordination point for NADP(+). KARI C-terminal knotted domains follow at residues 209 to 344 (SFIA…NAPS) and 345 to 486 (SNEH…MKDM). Mg(2+) is bound by residues aspartate 217, glutamate 221, glutamate 389, and glutamate 393. Position 414 (serine 414) interacts with substrate.

The protein belongs to the ketol-acid reductoisomerase family. It depends on Mg(2+) as a cofactor.

The enzyme catalyses (2R)-2,3-dihydroxy-3-methylbutanoate + NADP(+) = (2S)-2-acetolactate + NADPH + H(+). It carries out the reaction (2R,3R)-2,3-dihydroxy-3-methylpentanoate + NADP(+) = (S)-2-ethyl-2-hydroxy-3-oxobutanoate + NADPH + H(+). Its pathway is amino-acid biosynthesis; L-isoleucine biosynthesis; L-isoleucine from 2-oxobutanoate: step 2/4. It functions in the pathway amino-acid biosynthesis; L-valine biosynthesis; L-valine from pyruvate: step 2/4. Its function is as follows. Involved in the biosynthesis of branched-chain amino acids (BCAA). Catalyzes an alkyl-migration followed by a ketol-acid reduction of (S)-2-acetolactate (S2AL) to yield (R)-2,3-dihydroxy-isovalerate. In the isomerase reaction, S2AL is rearranged via a Mg-dependent methyl migration to produce 3-hydroxy-3-methyl-2-ketobutyrate (HMKB). In the reductase reaction, this 2-ketoacid undergoes a metal-dependent reduction by NADPH to yield (R)-2,3-dihydroxy-isovalerate. The chain is Ketol-acid reductoisomerase (NADP(+)) from Shewanella amazonensis (strain ATCC BAA-1098 / SB2B).